Here is a 449-residue protein sequence, read N- to C-terminus: MREVISINVGQAGCQIANSCWELYCLEHGIQPDGYLTEERKAQDPDQGFSTFFSETGNGKHVPRAIYCDLEPNVVDEVRTGAYRNLFHPEMMITGKEDASNNYARGHYTVGKELIDGVLDKIRRVADNCAGLQGFLVFHSFGGGTGSGFGALLMERLSVDYGKKSKLEFCVYPAPQTATSVVEPYNSILTTHTTLEHSDCSFMVDNEAIYDICRRNLGLERPNYENLNRLIAQVVSSITASLRFDGSLNVDLNEFQTNLVPYPRIHFPLVAYSPVISAAKAAHEANSVQEMTMSCFEPNNQMVKCDPRHGKYMATCLLYRGDVVPNDAHAAVATLKTKRTIQFVDWCPTGFKLGICYQAPENVPNGDLAKVSRAVCMLSNTTAIAEAWSSLSLKFDLMHSKRAFVHWYVGEGMEEGEFSEAREDLAALERDYEEVATDSMGDEELEAEY.

The GTP site is built by Gln11, Glu71, Ser140, Gly144, Thr145, Thr179, Asn206, and Asn228. Glu71 contacts Mg(2+). Glu254 is an active-site residue.

The protein belongs to the tubulin family. As to quaternary structure, dimer of alpha and beta chains. A typical microtubule is a hollow water-filled tube with an outer diameter of 25 nm and an inner diameter of 15 nM. Alpha-beta heterodimers associate head-to-tail to form protofilaments running lengthwise along the microtubule wall with the beta-tubulin subunit facing the microtubule plus end conferring a structural polarity. Microtubules usually have 13 protofilaments but different protofilament numbers can be found in some organisms and specialized cells. Mg(2+) is required as a cofactor.

Its subcellular location is the cytoplasm. The protein resides in the cytoskeleton. The enzyme catalyses GTP + H2O = GDP + phosphate + H(+). In terms of biological role, tubulin is the major constituent of microtubules, a cylinder consisting of laterally associated linear protofilaments composed of alpha- and beta-tubulin heterodimers. Microtubules grow by the addition of GTP-tubulin dimers to the microtubule end, where a stabilizing cap forms. Below the cap, tubulin dimers are in GDP-bound state, owing to GTPase activity of alpha-tubulin. In Gibberella zeae (strain ATCC MYA-4620 / CBS 123657 / FGSC 9075 / NRRL 31084 / PH-1) (Wheat head blight fungus), this protein is Tubulin alpha chain (TUB1).